Consider the following 116-residue polypeptide: Mercuric transport protein MerT (116 aa).

2 helical membrane passes run 16 to 36 and 46 to 66; these read LAAI…ALGF and VLEP…FFAW. Hg(2+)-binding residues include cysteine 24 and cysteine 25. Hg(2+)-binding residues include cysteine 76 and cysteine 82. The helical transmembrane segment at 94–114 threads the bilayer; the sequence is IFWFVAVLVLVALGFPYVMPF.

It belongs to the MerT family.

Its subcellular location is the cell inner membrane. In terms of biological role, involved in mercury resistance. Probably transfers a mercuric ion from the periplasmic Hg(2+)-binding protein MerP to the cytoplasmic mercuric reductase MerA. This is Mercuric transport protein MerT from Acinetobacter calcoaceticus.